Here is a 199-residue protein sequence, read N- to C-terminus: Prolactin-2 (199 aa).

Intrachain disulfides connect C4-C11, C58-C174, and C191-C199.

Belongs to the somatotropin/prolactin family.

Its subcellular location is the secreted. The sequence is that of Prolactin-2 from Alligator mississippiensis (American alligator).